An 894-amino-acid chain; its full sequence is Glutamate receptor 3 (894 aa).

The first 28 residues, 1–28 (MARQKKMGQSVLRAVFFLVLGLLGHSHG), serve as a signal peptide directing secretion. The Extracellular segment spans residues 29 to 552 (GFPNTISIGG…GVFSFLDPLA (524 aa)). Asn63, Asn266, Asn380, Asn415, and Asn422 each carry an N-linked (GlcNAc...) asparagine glycan. Residues Cys91 and Cys340 are joined by a disulfide bond. Positions 508, 510, and 515 each coordinate L-glutamate. Residues 553-573 (YEIWMCIVFAYIGVSVVLFLV) form a helical membrane-spanning segment. Residues 574–602 (SRFSPYEWHLEDNNEEPRDPQSPPDPPNE) are Cytoplasmic-facing. The helical; Pore-forming intramembrane region spans 603 to 618 (FGIFNSLWFSLGAFMQ). The stretch at 619–621 (QGC) is an intramembrane region. Residue Cys621 is the site of S-palmitoyl cysteine attachment. Residues 622–627 (DISPRS) are Cytoplasmic-facing. The chain crosses the membrane as a helical span at residues 628-648 (LSGRIVGGVWWFFTLIIISSY). Over 649–823 (TANLAAFLTV…DKTSALSLSN (175 aa)) the chain is Extracellular. Residues Ser686, Thr687, and Glu737 each coordinate L-glutamate. Cys750 and Cys805 are oxidised to a cystine. A helical transmembrane segment spans residues 824 to 844 (VAGVFYILVGGLGLAMMVALI). The Cytoplasmic portion of the chain corresponds to 845 to 894 (EFCYKSRAESKRMKLTKNTQNFKPAPATNTQNYATYREGYNVYGTESVKI). Cys847 carries the S-palmitoyl cysteine lipid modification. Residues Tyr877 and Tyr887 each carry the phosphotyrosine modification.

This sequence belongs to the glutamate-gated ion channel (TC 1.A.10.1) family. GRIA3 subfamily. Homotetramer or heterotetramer of pore-forming glutamate receptor subunits. Tetramers may be formed by the dimerization of dimers. Interacts with PICK1, GRIP1 and GRIP2. Found in a complex with GRIA1, GRIA2, GRIA4, CNIH2, CNIH3, CACNG2, CACNG3, CACNG4, CACNG5, CACNG7 and CACNG8. Interacts with CACNG5. Found in a complex with GRIA1, GRIA2, GRIA4, DLG4, CACNG8 and CNIH2.

The protein resides in the cell membrane. It localises to the postsynaptic cell membrane. It is found in the postsynaptic density membrane. The catalysed reaction is Ca(2+)(in) = Ca(2+)(out). Ionotropic glutamate receptor that functions as a ligand-gated cation channel, gated by L-glutamate and glutamatergic agonists such as alpha-amino-3-hydroxy-5-methyl-4-isoxazolepropionic acid (AMPA), quisqualic acid, and kainic acid. L-glutamate acts as an excitatory neurotransmitter at many synapses in the central nervous system and plays an important role in fast excitatory synaptic transmission by inducing long-term potentiation. Binding of the excitatory neurotransmitter L-glutamate induces a conformation change, leading to the opening of the cation channel, and thereby converts the chemical signal to an electrical impulse upon entry of calcium. The receptor then desensitizes rapidly and enters a transient inactive state, characterized by the presence of bound agonist. In the presence of CACNG8, shows resensitization which is characterized by a delayed accumulation of current flux upon continued application of glutamate. The polypeptide is Glutamate receptor 3 (Homo sapiens (Human)).